Reading from the N-terminus, the 137-residue chain is Large-conductance mechanosensitive channel (137 aa).

A run of 3 helical transmembrane segments spans residues 15–35 (IDLAIGVIIGGAFGGLVNSIV), 38–58 (IFMPIIGLITGGIDFSNMFIQ), and 80–100 (GNFITLLINFLIIAWVLFLFV).

The protein belongs to the MscL family. In terms of assembly, homopentamer.

The protein resides in the cell inner membrane. In terms of biological role, channel that opens in response to stretch forces in the membrane lipid bilayer. May participate in the regulation of osmotic pressure changes within the cell. This is Large-conductance mechanosensitive channel from Bartonella henselae (strain ATCC 49882 / DSM 28221 / CCUG 30454 / Houston 1) (Rochalimaea henselae).